The chain runs to 227 residues: GTP:AMP phosphotransferase AK3, mitochondrial (227 aa).

Residues Gly-17, Gly-19, Lys-20, Gly-21, and Thr-22 each contribute to the GTP site. The residue at position 20 (Lys-20) is an N6-succinyllysine. Lys-34 is subject to N6-acetyllysine. At Ser-37 the chain carries Phosphoserine. The NMP stretch occupies residues 37-66; sequence SSGDLLRDNMLRGTEIGVLAKAFIDQGKLI. AMP-binding residues include Ser-38 and Arg-43. N6-succinyllysine is present on Lys-57. Lys-64 is an AMP binding site. An N6-acetyllysine; alternate mark is found at Lys-64 and Lys-80. Residues Lys-64 and Lys-80 each carry the N6-succinyllysine; alternate modification. 3 residues coordinate AMP: Gly-91, Arg-94, and Gln-98. Residues 127–164 form an LID region; that stretch reads ARWIHPASGRVYNIEFNPPKTVGIDDLTGEPLIQREDD. Residues Arg-128, Tyr-138, Asn-139, Arg-161, and Arg-172 each contribute to the GTP site. An N6-acetyllysine; alternate mark is found at Lys-174 and Lys-189. An N6-succinyllysine; alternate mark is found at Lys-174 and Lys-189. Thr-201 is a GTP binding site. Lys-203 bears the N6-acetyllysine mark.

It belongs to the adenylate kinase family. AK3 subfamily. In terms of assembly, monomer. In terms of tissue distribution, highly expressed in heart, skeletal muscle and liver, moderately expressed in pancreas and kidney, and weakly expressed in placenta, brain and lung.

It is found in the mitochondrion matrix. It carries out the reaction a ribonucleoside 5'-triphosphate + AMP = a ribonucleoside 5'-diphosphate + ADP. The catalysed reaction is GTP + AMP = GDP + ADP. The enzyme catalyses ITP + AMP = IDP + ADP. With respect to regulation, inhibited by ATP. Its function is as follows. Mitochondrial adenylate kinase with a specific GTP:AMP phosphotransferase activity. Could also use ITP as phosphate donor. Its physiological function is to recycle GTP into GDP which is necessary for the TCA cycle in the mitochondrial matrix. This Homo sapiens (Human) protein is GTP:AMP phosphotransferase AK3, mitochondrial.